The primary structure comprises 479 residues: Aspartyl/glutamyl-tRNA(Asn/Gln) amidotransferase subunit B (479 aa).

The protein belongs to the GatB/GatE family. GatB subfamily. Heterotrimer of A, B and C subunits.

It catalyses the reaction L-glutamyl-tRNA(Gln) + L-glutamine + ATP + H2O = L-glutaminyl-tRNA(Gln) + L-glutamate + ADP + phosphate + H(+). It carries out the reaction L-aspartyl-tRNA(Asn) + L-glutamine + ATP + H2O = L-asparaginyl-tRNA(Asn) + L-glutamate + ADP + phosphate + 2 H(+). Functionally, allows the formation of correctly charged Asn-tRNA(Asn) or Gln-tRNA(Gln) through the transamidation of misacylated Asp-tRNA(Asn) or Glu-tRNA(Gln) in organisms which lack either or both of asparaginyl-tRNA or glutaminyl-tRNA synthetases. The reaction takes place in the presence of glutamine and ATP through an activated phospho-Asp-tRNA(Asn) or phospho-Glu-tRNA(Gln). The chain is Aspartyl/glutamyl-tRNA(Asn/Gln) amidotransferase subunit B from Streptococcus pyogenes serotype M5 (strain Manfredo).